Here is a 383-residue protein sequence, read N- to C-terminus: Erythronate-4-phosphate dehydrogenase (383 aa).

Residues serine 45 and threonine 66 each coordinate substrate. Residues aspartate 146 and threonine 175 each contribute to the NAD(+) site. The active site involves arginine 208. NAD(+) is bound at residue aspartate 232. Residue glutamate 237 is part of the active site. Residue histidine 254 is the Proton donor of the active site. NAD(+) is bound at residue glycine 257.

The protein belongs to the D-isomer specific 2-hydroxyacid dehydrogenase family. PdxB subfamily. In terms of assembly, homodimer.

The protein localises to the cytoplasm. The enzyme catalyses 4-phospho-D-erythronate + NAD(+) = (R)-3-hydroxy-2-oxo-4-phosphooxybutanoate + NADH + H(+). Its pathway is cofactor biosynthesis; pyridoxine 5'-phosphate biosynthesis; pyridoxine 5'-phosphate from D-erythrose 4-phosphate: step 2/5. In terms of biological role, catalyzes the oxidation of erythronate-4-phosphate to 3-hydroxy-2-oxo-4-phosphonooxybutanoate. The protein is Erythronate-4-phosphate dehydrogenase of Chromohalobacter salexigens (strain ATCC BAA-138 / DSM 3043 / CIP 106854 / NCIMB 13768 / 1H11).